Consider the following 76-residue polypeptide: Sec-independent protein translocase protein TatA (76 aa).

A helical transmembrane segment spans residues 1 to 21 (MGSFSIWHWLIVLVIVALVFG). 2 stretches are compositionally biased toward basic and acidic residues: residues 39 to 50 (FKDGMKGEDDKP) and 64 to 76 (GTVD…KSNS). A disordered region spans residues 39–76 (FKDGMKGEDDKPAAQNAAPSQVADKGTVDVEVKEKSNS).

The protein belongs to the TatA/E family. As to quaternary structure, the Tat system comprises two distinct complexes: a TatABC complex, containing multiple copies of TatA, TatB and TatC subunits, and a separate TatA complex, containing only TatA subunits. Substrates initially bind to the TatABC complex, which probably triggers association of the separate TatA complex to form the active translocon.

The protein resides in the cell inner membrane. Its function is as follows. Part of the twin-arginine translocation (Tat) system that transports large folded proteins containing a characteristic twin-arginine motif in their signal peptide across membranes. TatA could form the protein-conducting channel of the Tat system. The protein is Sec-independent protein translocase protein TatA of Herminiimonas arsenicoxydans.